We begin with the raw amino-acid sequence, 422 residues long: DNA-directed RNA polymerase III subunit RPC4 (422 aa).

Disordered regions lie at residues 1 to 80 (MSSN…GQQR), 115 to 190 (KSEG…DDEE), 219 to 244 (IQEA…GTGL), and 318 to 350 (RPAV…TKDA). Residues 25–29 (KPSLK) carry the Nuclear localization signal motif. Basic residues predominate over residues 28-37 (LKFKPKAVAR). Basic and acidic residues predominate over residues 38-64 (KSKEEREAAASKVKLEEESKRGNDKKH). 2 positions are modified to phosphoserine: Ser-137 and Ser-138. The span at 138 to 148 (SENEAEDDDNE) shows a compositional bias: acidic residues. Over residues 160-170 (MGKEFEARNLI) the composition is skewed to basic and acidic residues. 3 positions are modified to phosphoserine: Ser-178, Ser-182, and Ser-224. The segment covering 219 to 229 (IQEALSEKPTR) has biased composition (basic and acidic residues). Phosphothreonine occurs at positions 228 and 232.

The protein belongs to the eukaryotic RPC4/POLR3D RNA polymerase subunit family. As to quaternary structure, component of the RNA polymerase III (Pol III) complex consisting of 17 subunits. Interacts with RPC37/RPC5. RPC53/RPC4, RPC37/RPC5 and RPC11/RPC10 probably form a Pol III subcomplex.

It localises to the nucleus. Its function is as follows. DNA-dependent RNA polymerase catalyzes the transcription of DNA into RNA using the four ribonucleoside triphosphates as substrates. Specific peripheric component of RNA polymerase III which synthesizes small RNAs, such as 5S rRNA and tRNAs. Essential for tRNA synthesis. The RPC53/RPC4-RPC37/RPC5 subcomplex is required for terminator recognition and reinitiation. The sequence is that of DNA-directed RNA polymerase III subunit RPC4 (RPC53) from Saccharomyces cerevisiae (strain ATCC 204508 / S288c) (Baker's yeast).